Consider the following 644-residue polypeptide: Exoribonuclease 2 (644 aa).

One can recognise an RNB domain in the interval 189-516; the sequence is REDLTALNFV…NHRLLKAIIA (328 aa). Residues 561–643 enclose the S1 motif domain; that stretch reads DERFNAEIID…ETRSVIARPA (83 aa).

Belongs to the RNR ribonuclease family. RNase II subfamily.

Its subcellular location is the cytoplasm. The catalysed reaction is Exonucleolytic cleavage in the 3'- to 5'-direction to yield nucleoside 5'-phosphates.. Its function is as follows. Involved in mRNA degradation. Hydrolyzes single-stranded polyribonucleotides processively in the 3' to 5' direction. In Serratia proteamaculans (strain 568), this protein is Exoribonuclease 2.